The chain runs to 76 residues: Omega-conotoxin-like TeAr94 (76 aa).

The first 22 residues, 1–22, serve as a signal peptide directing secretion; sequence MKLTCMMIVAVLFLTAWTFVTA. A propeptide spanning residues 23–50 is cleaved from the precursor; that stretch reads VPHSSNALENLYLKAHHEMNNPEDSELN. 3 disulfides stabilise this stretch: C53–C67, C60–C71, and C66–C75.

It belongs to the conotoxin O1 superfamily. In terms of tissue distribution, expressed by the venom duct.

The protein localises to the secreted. Omega-conotoxins act at presynaptic membranes, they bind and block voltage-gated calcium channels. The sequence is that of Omega-conotoxin-like TeAr94 from Conus textile (Cloth-of-gold cone).